The sequence spans 327 residues: tRNA pseudouridine synthase B (327 aa).

Asp83 acts as the Nucleophile in catalysis.

Belongs to the pseudouridine synthase TruB family. Type 1 subfamily.

The catalysed reaction is uridine(55) in tRNA = pseudouridine(55) in tRNA. Its function is as follows. Responsible for synthesis of pseudouridine from uracil-55 in the psi GC loop of transfer RNAs. The sequence is that of tRNA pseudouridine synthase B from Mesomycoplasma hyopneumoniae (strain 232) (Mycoplasma hyopneumoniae).